The following is a 213-amino-acid chain: Thymidylate kinase (213 aa).

Residue 9–16 (GIEGCGKT) coordinates ATP.

The protein belongs to the thymidylate kinase family.

The enzyme catalyses dTMP + ATP = dTDP + ADP. Phosphorylation of dTMP to form dTDP in both de novo and salvage pathways of dTTP synthesis. The polypeptide is Thymidylate kinase (Geobacter sulfurreducens (strain ATCC 51573 / DSM 12127 / PCA)).